Consider the following 233-residue polypeptide: Thrombin-like enzyme elegaxobin-2 (233 aa).

Residues 1-224 (VIGGDECNIN…HLDWIKGIIA (224 aa)) enclose the Peptidase S1 domain. 6 cysteine pairs are disulfide-bonded: Cys-7/Cys-138, Cys-25/Cys-41, Cys-73/Cys-231, Cys-117/Cys-185, Cys-149/Cys-164, and Cys-175/Cys-200. His-40 (charge relay system) is an active-site residue. Residue Asn-78 is glycosylated (N-linked (GlcNAc...) asparagine). Catalysis depends on Asp-85, which acts as the Charge relay system. The Charge relay system role is filled by Ser-179.

The protein belongs to the peptidase S1 family. Snake venom subfamily. As to quaternary structure, monomer. In terms of tissue distribution, expressed by the venom gland.

The protein resides in the secreted. Its function is as follows. Thrombin-like snake venom serine protease that clots rabbit fibrinogen. Only the beta chain of fibrinogen (FGB) is cleaved, releasing fibrinopeptide B. Human and bovine fibrinogen are unaffected. Also cleaves Met-Lys and Arg-Ser bonds in heat-denatured bovine plasma kininogen to release Lys-bradykinin. In Protobothrops elegans (Elegant pitviper), this protein is Thrombin-like enzyme elegaxobin-2.